Here is an 858-residue protein sequence, read N- to C-terminus: MVNFTVDQIRAIMDKKANIRNMSVIAHVDHGKSTLTDSLVCKAGIIASARAGETRFTDTRKDEQERCITIKSTAISLFYELSENDLNFIKQSKDGAGFLINLIDSPGHVDFSSEVTAALRVTDGALVVVDCVSGVCVQTETVLRQAIAERIKPVLMMNKMDRALLELQLEPEELYQTFQRIVENVNVIISTYGEGESGPMGNIMIDPVLGTVGFGSGLHGWAFTLKQFAEMYVAKFAAKGEGQLGPAERAKKVEDMMKKLWGDRYFDPATGKFSKSASSPDGKKLPRTFCQLILDPIFKVFDAIMNFKKEETAKLIEKLDIKLDSEDKDKEGKPLLKAVMRRWLPAGDALLQMITIHLPSPVTAQKYRCELLYEGPPDDEAAMGIKSCDPKGPLMMYISKMVPTSDKGRFYAFGRVFSGLVSTGLKVRIMGPNYTPGKKEDLYLKPIQRTILMMGRYVEPIEDVPCGNIVGLVGVDQFLVKTGTITTFEHAHNMRVMKFSVSPVVRVAVEAKNPADLPKLVEGLKRLAKSDPMVQCIIEESGEHIIAGAGELHLEICLKDLEEDHACIPIKKSDPVVSYRETVSEESNVLCLSKSPNKHNRLYMKARPFPDGLAEDIDKGEVSARQELKQRARYLAEKYEWDVAEARKIWCFGPDGTGPNILTDITKGVQYLNEIKDSVVAGFQWATKEGALCEENMRGVRFDVHDVTLHADAIHRGGGQIIPTARRCLYASVLTAQPRLMEPIYLVEIQCPEQVVGGIYGVLNRKRGHVFEESQVAGTPMFVVKAYLPVNESFGFTADLRSNTGGQAFPQCVFDHWQILPGDPFDNTSRPSQVVAETRKRKGLKEGIPALDNFLDKL.

One can recognise a tr-type G domain in the interval 17–362 (ANIRNMSVIA…MITIHLPSPV (346 aa)). 26–33 (AHVDHGKS) lines the GTP pocket. Phosphothreonine is present on Thr-54. A Phosphothreonine; by EEF2K modification is found at Thr-57. Thr-59 is subject to Phosphothreonine. Position 152 is an N6-succinyllysine (Lys-152). Residues 158–161 (NKMD) and 216–218 (SGL) contribute to the GTP site. Lys-235 bears the N6-acetyllysine mark. Lys-239 carries the N6-acetyllysine; alternate modification. Lys-239 is covalently cross-linked (Glycyl lysine isopeptide (Lys-Gly) (interchain with G-Cter in SUMO1); alternate). Tyr-265 bears the Phosphotyrosine; by CSK mark. Lys-272 bears the N6-acetyllysine; alternate mark. An N6-succinyllysine; alternate modification is found at Lys-272. Lys-275 carries the N6-acetyllysine modification. Lys-322 participates in a covalent cross-link: Glycyl lysine isopeptide (Lys-Gly) (interchain with G-Cter in SUMO). The residue at position 325 (Ser-325) is a Phosphoserine. The residue at position 373 (Tyr-373) is a Phosphotyrosine; by CSK. Thr-435 bears the Phosphothreonine mark. Residues Lys-439 and Lys-445 each carry the N6-acetyllysine modification. Ser-502 is subject to Phosphoserine. Residue Lys-525 is modified to N6,N6,N6-trimethyllysine; by EEF2KMT. Residue Lys-529 forms a Glycyl lysine isopeptide (Lys-Gly) (interchain with G-Cter in SUMO) linkage. An N6-succinyllysine modification is found at Lys-572. A Phosphoserine; by CDK2 modification is found at Ser-595. An N6-acetyllysine modification is found at Lys-619. At His-715 the chain carries Diphthamide.

It belongs to the TRAFAC class translation factor GTPase superfamily. Classic translation factor GTPase family. EF-G/EF-2 subfamily. In terms of assembly, binds to 80S ribosomes. Actively translating ribosomes show mutually exclusive binding of eIF5a (EIF5A or EIF5A2) and EEF2/eEF2. Interacts with SERBP1; interaction sequesters EEF2/eEF2 at the A-site of the ribosome, thereby blocking the interaction sites of the mRNA-tRNA complex, promoting ribosome stabilization and hibernation. Interacts with HABP4; interaction takes place at the A-site of hibernating ribosomes and promotes ribosome stabilization. Component of the mRNA surveillance SURF complex, at least composed of ERF1, ERF3 (ERF3A or ERF3B), EEF2, UPF1/RENT1, SMG1, SMG8 and SMG9. Interacts with RBPMS2. Post-translationally, phosphorylation by EF-2 kinase completely inactivates EF-2; it requires prior phosphorylation by CDK2 at Ser-595 during mitotic prometaphase. Phosphorylation by CSK promotes SUMOylation, proteolytic cleavage, and nuclear translocation if the C-terminal fragment. In terms of processing, diphthamide is 2-[3-carboxyamido-3-(trimethyl-ammonio)propyl]histidine. ISGylated. Post-translationally, proteolytically processed at two sites following phosphorylation by CSK. In terms of processing, SUMOylated following phosphorylation by CSK, promotes proteolytic cleavage.

Its subcellular location is the cytoplasm. It is found in the nucleus. The enzyme catalyses GTP + H2O = GDP + phosphate + H(+). Its function is as follows. Catalyzes the GTP-dependent ribosomal translocation step during translation elongation. During this step, the ribosome changes from the pre-translocational (PRE) to the post-translocational (POST) state as the newly formed A-site-bound peptidyl-tRNA and P-site-bound deacylated tRNA move to the P and E sites, respectively. Catalyzes the coordinated movement of the two tRNA molecules, the mRNA and conformational changes in the ribosome. The polypeptide is Elongation factor 2 (EEF2) (Callithrix jacchus (White-tufted-ear marmoset)).